The following is a 92-amino-acid chain: Cell division protein FtsB (92 aa).

At Met1–Leu3 the chain is on the cytoplasmic side. Residues Leu4–Phe21 form a helical membrane-spanning segment. The Periplasmic portion of the chain corresponds to Gly22–Lys92. Positions Asp28–Gly63 form a coiled coil.

Belongs to the FtsB family. As to quaternary structure, part of a complex composed of FtsB, FtsL and FtsQ.

It localises to the cell inner membrane. In terms of biological role, essential cell division protein. May link together the upstream cell division proteins, which are predominantly cytoplasmic, with the downstream cell division proteins, which are predominantly periplasmic. The sequence is that of Cell division protein FtsB from Haemophilus influenzae (strain 86-028NP).